The chain runs to 594 residues: MTLDKLRKKYIDFFKSKKHFEIMGKSLVPENDPTVLFNTAGMQPLIPYLLGEVHPSGDMLVNVQKCLRTGDIDEVGDLSHLTFFEMLGNWSLGAYFKEYSVKCSFEFLTSSDYLNIPKDSLYVSVFEGDQKIPCDTETAKVWESLGIPKDRIYYLSKAHNFWGPVGSKGPCGPDTEIYVDTGKIKCSLDCNITCSCGKYFEIWNNVFMQYNKDENGNYIELDRKCVDTGMGLERTIAFLQGKSSVYDTDAFIPIIKRIEVISGKIYGQKEDDDRCIRIISDHVKAACFILADSSVVSPSNLGQGYVLRRLIRRSIRYAKKLGIKSHFLADLVDSIETIYGSFYNELTEKKDFIKKELSTEEEKFFKTLFQGEQEFIKITRNLPSKTIPGDIAFKLYDTYGFPYEVTEELAFEYGFNIDKVGFDEYFKKHQKTSKKGGDKVFKGGLADYTYETTRLHTATHLLHKALQLVLGDHVRQKGSNITAERLRFDFVHSEKMTDDEIKKVEEIVNLQIKNSLSVKKSIMELSEAQKKGAMALFGEKYDNLVSVYEIDGFSLEVCGGPHVENTNELGTFKIQKEQSSSSGIRRIKAILIDK.

4 residues coordinate Zn(2+): histidine 456, histidine 460, cysteine 558, and histidine 562.

Belongs to the class-II aminoacyl-tRNA synthetase family. The cofactor is Zn(2+).

It localises to the cytoplasm. The catalysed reaction is tRNA(Ala) + L-alanine + ATP = L-alanyl-tRNA(Ala) + AMP + diphosphate. Its function is as follows. Catalyzes the attachment of alanine to tRNA(Ala) in a two-step reaction: alanine is first activated by ATP to form Ala-AMP and then transferred to the acceptor end of tRNA(Ala). Also edits incorrectly charged Ser-tRNA(Ala) and Gly-tRNA(Ala) via its editing domain. This chain is Alanine--tRNA ligase (alaS), found in Borrelia garinii subsp. bavariensis (strain ATCC BAA-2496 / DSM 23469 / PBi) (Borreliella bavariensis).